The primary structure comprises 468 residues: ATP synthase subunit beta (468 aa).

Residue 155-162 participates in ATP binding; sequence GGAGVGKT.

It belongs to the ATPase alpha/beta chains family. In terms of assembly, F-type ATPases have 2 components, CF(1) - the catalytic core - and CF(0) - the membrane proton channel. CF(1) has five subunits: alpha(3), beta(3), gamma(1), delta(1), epsilon(1). CF(0) has three main subunits: a(1), b(2) and c(9-12). The alpha and beta chains form an alternating ring which encloses part of the gamma chain. CF(1) is attached to CF(0) by a central stalk formed by the gamma and epsilon chains, while a peripheral stalk is formed by the delta and b chains.

It is found in the cell membrane. The enzyme catalyses ATP + H2O + 4 H(+)(in) = ADP + phosphate + 5 H(+)(out). Produces ATP from ADP in the presence of a proton gradient across the membrane. The catalytic sites are hosted primarily by the beta subunits. This is ATP synthase subunit beta from Streptococcus pneumoniae (strain CGSP14).